The chain runs to 208 residues: Guanylate kinase (208 aa).

One can recognise a Guanylate kinase-like domain in the interval 5–184; the sequence is GLLIVFSGPS…AAERVKCVIE (180 aa). Position 12–19 (12–19) interacts with ATP; it reads GPSGVGKG.

Belongs to the guanylate kinase family.

It is found in the cytoplasm. It catalyses the reaction GMP + ATP = GDP + ADP. Essential for recycling GMP and indirectly, cGMP. The protein is Guanylate kinase of Streptococcus pneumoniae (strain ATCC BAA-255 / R6).